We begin with the raw amino-acid sequence, 802 residues long: Leucine--tRNA ligase (802 aa).

Positions 41–52 match the 'HIGH' region motif; sequence PYPSGQGLHVGH. Residues 580 to 584 carry the 'KMSKS' region motif; that stretch reads KMSKS. Lysine 583 lines the ATP pocket.

This sequence belongs to the class-I aminoacyl-tRNA synthetase family.

The protein resides in the cytoplasm. It carries out the reaction tRNA(Leu) + L-leucine + ATP = L-leucyl-tRNA(Leu) + AMP + diphosphate. The protein is Leucine--tRNA ligase of Alkaliphilus oremlandii (strain OhILAs) (Clostridium oremlandii (strain OhILAs)).